The sequence spans 802 residues: E3 ubiquitin-protein ligase UHRF2 (802 aa).

One can recognise a Ubiquitin-like domain in the interval 1 to 78 (MWIQVRTIDG…IQLLVRPDPD (78 aa)). Disordered stretches follow at residues 80–116 (LPGT…TSAR) and 153–197 (RASD…STSN). 3 stretches are compositionally biased toward polar residues: residues 82-96 (GTST…SNSP), 153-177 (RASD…TNGN), and 188-197 (KLDSVPSTSN). The required for interaction with histone H3 stretch occupies residues 117-311 (ARLIDPGFGI…VDEIFKIERP (195 aa)). Residues 194–288 (STSNSDCVAA…KELRVKIFLG (95 aa)) form an interaction with PCNP region. Residues 344 to 395 (SCSCRVCGGKHEPNMQLLCDECNVAYHIYCLNPPLDKVPEEEYWYCPSCKTD) form a PHD-type zinc finger. Residues 414-644 (KMPSASTESR…LQYPAGYPSD (231 aa)) form a methyl-CpG binding and interaction with HDAC1 region. The YDG domain occupies 448–612 (GPIPGIPVGS…FLVWRYLLRR (165 aa)). Residues 640–674 (GYPSDKEGKKPKGQSKKQPSGTTKRPISDDDCPSA) form a disordered region. The residue at position 667 (serine 667) is a Phosphoserine. An RING-type zinc finger spans residues 733–772 (CVCCQELVYQPVTTECFHNVCKDCLQRSFKAQVFSCPACR).

As to quaternary structure, homodimer; disulfide-linked. Binds methylated CpG containing oligonucleotides. Interacts with H3; the interaction has a preference for the 'Lys-9' trimethylated form of H3 (H3K9me3). Interacts with PCNP. Interacts with HDAC1. Interacts directly with CCNE1; the interaction ubiquitinates CCNE1 and appears independent of CCNE1 phosphorylation. Interacts with CCND1; the interaction ubiquitinates CCND1 and appears independent of CCND1 phosphorylation. Interacts with p53/TP53 and RB1. Interacts with UBE2I. Interacts with ZNF618. Interacts with UHRF1. Interacts with FANCD2. Interacts with ATR. Interacts with PCNA. May be autoubiquitinated; which may lead to proteasomal degradation. Post-translationally, phosphorylated. Phosphorylation may be mediated by CDK2. In terms of processing, autosumoylated.

Its subcellular location is the nucleus. The protein resides in the chromosome. It catalyses the reaction S-ubiquitinyl-[E2 ubiquitin-conjugating enzyme]-L-cysteine + [acceptor protein]-L-lysine = [E2 ubiquitin-conjugating enzyme]-L-cysteine + N(6)-ubiquitinyl-[acceptor protein]-L-lysine.. It participates in protein modification; protein ubiquitination. With respect to regulation, E3 ligase activity is robustly activated by 5-hydroxymethylcytosine. Its function is as follows. E3 ubiquitin ligase that plays important roles in DNA methylation, histone modifications, cell cycle and DNA repair. Acts as a specific reader for 5-hydroxymethylcytosine (5hmC) and thereby recruits various substrates to these sites to ubiquitinate them. This activity also allows the maintenance of 5mC levels at specific genomic loci and regulates neuron-related gene expression. Participates in cell cycle regulation by ubiquitinating cyclins CCND1 and CCNE1 and thereby inducing G1 arrest. Also ubiquitinates PCNP leading to its degradation by the proteasome. Plays an active role in DNA damage repair by ubiquitinating p21/CDKN1A leading to its proteasomal degradation. Also promotes DNA repair by acting as an interstrand cross-links (ICLs) sensor. Mechanistically, cooperates with UHRF1 to ensure recruitment of FANCD2 to ICLs, leading to FANCD2 monoubiquitination and subsequent activation. Contributes to UV-induced DNA damage response by physically interacting with ATR in response to irradiation, thereby promoting ATR activation. This Homo sapiens (Human) protein is E3 ubiquitin-protein ligase UHRF2 (UHRF2).